The primary structure comprises 581 residues: uncharacterized protein (581 aa).

It belongs to the UbiD family.

This is an uncharacterized protein from Chlamydia caviae (strain ATCC VR-813 / DSM 19441 / 03DC25 / GPIC) (Chlamydophila caviae).